The chain runs to 964 residues: Syndetin (964 aa).

The residue at position 1 (methionine 1) is an N-acetylmethionine. A disordered region spans residues 1-25; the sequence is MQKIKSLMTRQGLKSPPESLNDLGA. Serine 15 carries the phosphoserine modification. Coiled coils occupy residues 81–107 and 216–244; these read LNLQELEEYRDKLKQQQAAVSKKVADL and YSCISELNSKLQDTLEQIEEQLDVALSKI. 4 positions are modified to phosphoserine: serine 494, serine 498, serine 559, and serine 561. The segment at 532 to 563 is disordered; that stretch reads DEETEDVLASNGYESDEQEKSAYQDYDSDSDV. Residue lysine 963 forms a Glycyl lysine isopeptide (Lys-Gly) (interchain with G-Cter in SUMO1); alternate linkage. Residue lysine 963 forms a Glycyl lysine isopeptide (Lys-Gly) (interchain with G-Cter in SUMO2); alternate linkage.

It belongs to the syndetin family. Component of the endosome-associated retrograde protein (EARP) complex, composed of VPS51, VPS52, VPS53 and VPS50/Syndetin. The EARP complex interacts with EIPR1. Interacts with VPS51 and VPS53 in an EIPR1-independent manner. As to expression, expressed in the brain (at protein level).

It is found in the recycling endosome. Its subcellular location is the membrane. Functionally, acts as a component of the EARP complex that is involved in endocytic recycling. The EARP complex associates with Rab4-positive endosomes and promotes recycling of internalized transferrin receptor (TFRC) to the plasma membrane. Within the EARP complex, required to tether the complex to recycling endosomes. Not involved in retrograde transport from early and late endosomes to the trans-Golgi network (TGN). This chain is Syndetin, found in Rattus norvegicus (Rat).